The sequence spans 343 residues: MDDNKAKALAAALQQIEKQFGKGSIMKMGDAEIDEGIQVVSTGSLGLDIALGVGGLPRGRVVEIYGPESSGKTTLCLQVVAEMQKLGGVAAFIDAEHALDPQYAQKLGVNVGDLLISQPDTGEQALEIADMLVRSGSVDIIVVDSVAALTPRAEIEGEMGDQMVGLHARLMSQALRKLTANIKKTNTLVIFINQIRMKIGVMFGSPETTTGGNALKFYASVRLDIRRIGAIKKGDEVIGSETKVKVVKNKVAPPFREAIFDILYGEGISRQGEIVEMGVAHKLVDKSGAWYAYKGEKIGQGKDNAREFLKANPEIAQEIEAGIREAASTNVIKPVKAAKAADA.

66–73 (GPESSGKT) is an ATP binding site.

Belongs to the RecA family.

It is found in the cytoplasm. In terms of biological role, can catalyze the hydrolysis of ATP in the presence of single-stranded DNA, the ATP-dependent uptake of single-stranded DNA by duplex DNA, and the ATP-dependent hybridization of homologous single-stranded DNAs. It interacts with LexA causing its activation and leading to its autocatalytic cleavage. In Dechloromonas aromatica (strain RCB), this protein is Protein RecA.